Reading from the N-terminus, the 696-residue chain is F-box/LRR-repeat protein 5 (696 aa).

Residues 1–159 (MAPFPDEVDV…IKKQVIAQHS (159 aa)) are hemerythrin-like. Residues His-15, His-57, Glu-58, Glu-61, His-80, His-126, and Glu-130 each coordinate Fe(3+). Positions 205–251 (STHISQLPTEILLCLFRYLGPEDLCHCGQVCSAWSDLAKTGSLWRHL) constitute an F-box domain. LRR repeat units follow at residues 343–367 (SSTVSSKMVRQILSLCPNLTHLDLT), 368–395 (QTDVTDSAFDSWSSLWACLSLEHLDLSG), 396–421 (CEKLTDRTLKKLSLGLGDLASPTCSE), 582–612 (CSSGGQLCLECDNRTDPSDGRRSLRFLSLSG), 613–640 (CYQVTDLGLRALSQRGGLPLLEHLNLSG), and 641–666 (CLLITEVGLQELVSACPALNDEHFYY). Cys-667, Cys-681, Cys-691, and Cys-692 together coordinate [2Fe-2S] cluster.

In terms of assembly, part of a SCF (SKP1-cullin-F-box) protein ligase complex. [2Fe-2S] cluster serves as cofactor. Ubiquitinated upon iron and oxygen depletion, leading to its degradation by the proteasome. Ubiquitination is regulated by the hemerythrin-like region that acts as an oxygen and iron sensor.

The protein resides in the cytoplasm. Its subcellular location is the perinuclear region. The protein localises to the nucleus. It functions in the pathway protein modification; protein ubiquitination. In terms of biological role, component of some SCF (SKP1-cullin-F-box) protein ligase complex that plays a central role in iron homeostasis by promoting the ubiquitination and subsequent degradation of ireb2/irp2. Upon high iron and oxygen level, it specifically recognizes and binds ireb2/irp2, promoting its ubiquitination and degradation by the proteasome. The sequence is that of F-box/LRR-repeat protein 5 (fbxl5) from Salmo salar (Atlantic salmon).